We begin with the raw amino-acid sequence, 103 residues long: Urease subunit beta (103 aa).

The protein belongs to the urease beta subunit family. Heterotrimer of UreA (gamma), UreB (beta) and UreC (alpha) subunits. Three heterotrimers associate to form the active enzyme.

Its subcellular location is the cytoplasm. It catalyses the reaction urea + 2 H2O + H(+) = hydrogencarbonate + 2 NH4(+). Its pathway is nitrogen metabolism; urea degradation; CO(2) and NH(3) from urea (urease route): step 1/1. The chain is Urease subunit beta from Mycobacterium marinum (strain ATCC BAA-535 / M).